The following is a 229-amino-acid chain: Heptaprenylglyceryl phosphate synthase (229 aa).

Sn-glycerol 1-phosphate is bound at residue Lys12. Mg(2+)-binding residues include Asp14 and Ser40. Sn-glycerol 1-phosphate is bound by residues Tyr159–Gly164, Gly189, and Gly209–Asn210.

It belongs to the GGGP/HepGP synthase family. Group I subfamily. Homodimer. It depends on Mg(2+) as a cofactor.

It catalyses the reaction sn-glycerol 1-phosphate + all-trans-heptaprenyl diphosphate = 3-heptaprenyl-sn-glycero-1-phosphate + diphosphate. It participates in membrane lipid metabolism; glycerophospholipid metabolism. In terms of biological role, prenyltransferase that catalyzes in vivo the transfer of the heptaprenyl moiety of heptaprenyl pyrophosphate (HepPP; 35 carbon atoms) to the C3 hydroxyl of sn-glycerol-1-phosphate (G1P), producing heptaprenylglyceryl phosphate (HepGP). This reaction is an ether-bond-formation step in the biosynthesis of archaea-type G1P-based membrane lipids found in Bacillales. The sequence is that of Heptaprenylglyceryl phosphate synthase from Bacillus cereus (strain ATCC 10987 / NRS 248).